We begin with the raw amino-acid sequence, 299 residues long: Ribosomal RNA small subunit methyltransferase H (299 aa).

Residues 36–38 (GGH), Asp55, Tyr82, Asp103, and Gln110 each bind S-adenosyl-L-methionine. Basic and acidic residues-rich tracts occupy residues 269-282 (PVRP…ENPR) and 289-299 (RAAERIEEGGD). Positions 269–299 (PVRPSEEEIRENPRARSGRLRAAERIEEGGD) are disordered.

This sequence belongs to the methyltransferase superfamily. RsmH family.

It localises to the cytoplasm. It carries out the reaction cytidine(1402) in 16S rRNA + S-adenosyl-L-methionine = N(4)-methylcytidine(1402) in 16S rRNA + S-adenosyl-L-homocysteine + H(+). In terms of biological role, specifically methylates the N4 position of cytidine in position 1402 (C1402) of 16S rRNA. This is Ribosomal RNA small subunit methyltransferase H from Thermotoga maritima (strain ATCC 43589 / DSM 3109 / JCM 10099 / NBRC 100826 / MSB8).